Here is a 230-residue protein sequence, read N- to C-terminus: Orotidine 5'-phosphate decarboxylase (230 aa).

Substrate is bound by residues aspartate 11, lysine 34, 61 to 70 (DLKLHDIPNT), threonine 117, arginine 179, glutamine 188, glycine 208, and arginine 209. Catalysis depends on lysine 63, which acts as the Proton donor.

The protein belongs to the OMP decarboxylase family. Type 1 subfamily. In terms of assembly, homodimer.

The catalysed reaction is orotidine 5'-phosphate + H(+) = UMP + CO2. Its pathway is pyrimidine metabolism; UMP biosynthesis via de novo pathway; UMP from orotate: step 2/2. Catalyzes the decarboxylation of orotidine 5'-monophosphate (OMP) to uridine 5'-monophosphate (UMP). In Streptococcus pyogenes serotype M6 (strain ATCC BAA-946 / MGAS10394), this protein is Orotidine 5'-phosphate decarboxylase.